Consider the following 327-residue polypeptide: MDAKMGYIFKVMRWIFCFVACGITFGCTNSGFQNANSRPCILSMNRMIHDCVERVVGNRLATAVLIKGSLDPHAYEMVKGDKDKIAGSAVIFCNGLGLEHTLSLRKHLENNPNSVKLGERLIARGAFVPLEEDGICDPHIWMDLSIWKEAVIEITEVLIEKFPEWSAEFKANSEELVCEMSILDSWAKQCLSTIPENLRYLVSGHNAFSYFTRRYLATPEEVASGAWRSRCISPEGLSPEAQISVRDIMAVVDYINEHDVSVVFPEDTLNQDALKKIVSSLKKSHLVRLAQKPLYSDNVDDNYFSTFKHNVCLITEELGGVALECQR.

A signal peptide spans 1–20 (MDAKMGYIFKVMRWIFCFVA). Fe(2+)-binding residues include His-73, His-139, His-205, and Asp-297.

It belongs to the bacterial solute-binding protein 9 family. As to quaternary structure, monomer.

It localises to the periplasm. In terms of biological role, part of the ATP-binding cassette (ABC) transport system YtgABCD involved in metal import. Binds Fe(2+), Mn(2+) and Ni(2+), with a preference for Fe(2+) and delivers them to the membrane permease for translocation into the cytoplasm. This Chlamydia pneumoniae (Chlamydophila pneumoniae) protein is Metal-binding protein YtgA.